A 552-amino-acid polypeptide reads, in one-letter code: Hyaluronan synthase 2 (552 aa).

The Cytoplasmic segment spans residues 1 to 11 (MHCERFLCVLR). Residues 12-32 (IIGTTLFGVSLLLGITAAYIV) form a helical membrane-spanning segment. Residues 33–45 (GYQFIQTDNYYFS) lie on the Extracellular side of the membrane. A helical membrane pass occupies residues 46-66 (FGLYGAFLASHLIIQSLFAFL). Residues 67–374 (EHRKMKKSLE…NAMWFHKHHL (308 aa)) are Cytoplasmic-facing. Thr-110 is subject to Phosphothreonine. A Glycyl lysine isopeptide (Lys-Gly) (interchain with G-Cter in ubiquitin) cross-link involves residue Lys-190. The O-linked (GlcNAc) serine glycan is linked to Ser-221. Thr-328 carries the phosphothreonine modification. A helical membrane pass occupies residues 375 to 395 (WMTYEAVITGFFPFFLIATVI). Residues 396–402 (QLFYRGK) lie on the Extracellular side of the membrane. The helical transmembrane segment at 403–423 (IWNILLFLLTVQLVGLIKSSF) threads the bilayer. Residues 424–429 (ASCLRG) lie on the Cytoplasmic side of the membrane. A helical transmembrane segment spans residues 430–450 (NIVMVFMSLYSVLYMSSLLPA). Residues 451 to 475 (KMFAIATINKAGWGTSGRKTIVVNF) lie on the Extracellular side of the membrane. A helical membrane pass occupies residues 476-496 (IGLIPVSVWFTILLGGVIFTI). Residues 497 to 510 (YKESKKPFSESKQT) are Cytoplasmic-facing. A helical transmembrane segment spans residues 511 to 531 (VLIVGTLIYACYWVMLLTLYV). Residues 532–552 (VLINKCGRRKKGQQYDMVLDV) lie on the Extracellular side of the membrane.

Belongs to the NodC/HAS family. Homodimer; dimerization promotes enzymatic activity. Forms heterodimer with HAS3. Forms heterodimer with HAS1. Mg(2+) is required as a cofactor. In terms of processing, phosphorylation at Thr-328 is essential for hyaluronan synthase activity. Post-translationally, O-GlcNAcylation at Ser-221 increases the stability of HAS2 and plasma membrane localization. Ubiquitination at Lys-190; this ubiquitination is essential for hyaluronan synthase activity and homo- or hetero-oligomerization. Can also be poly-ubiquitinated. Deubiquitinated by USP17L22/USP17 and USP4. USP17L22/USP17 efficiently removes 'Lys-63'- and 'Lys-48'-linked polyubiquitin chains, whereas USP4 preferentially removes monoubiquitination and, partially, both 'Lys-63'- and 'Lys-48'-linked polyubiquitin chain. Expressed in heart, brain, spleen, lung and skeletal muscle.

The protein localises to the cell membrane. The protein resides in the endoplasmic reticulum membrane. It localises to the vesicle. It is found in the golgi apparatus membrane. Its subcellular location is the lysosome. The catalysed reaction is [hyaluronan](n) + UDP-N-acetyl-alpha-D-glucosamine = N-acetyl-beta-D-glucosaminyl-(1-&gt;4)-[hyaluronan](n) + UDP + H(+). It carries out the reaction N-acetyl-beta-D-glucosaminyl-(1-&gt;4)-[hyaluronan](n) + UDP-alpha-D-glucuronate = [hyaluronan](n+1) + UDP + H(+). Its pathway is glycan biosynthesis; hyaluronan biosynthesis. Catalyzes the addition of GlcNAc or GlcUA monosaccharides to the nascent hyaluronan polymer. Therefore, it is essential to hyaluronan synthesis a major component of most extracellular matrices that has a structural role in tissues architectures and regulates cell adhesion, migration and differentiation. This is one of the isozymes catalyzing that reaction and it is particularly responsible for the synthesis of high molecular mass hyaluronan. Required for the transition of endocardial cushion cells into mesenchymal cells, a process crucial for heart development. May also play a role in vasculogenesis. High molecular mass hyaluronan also play a role in early contact inhibition a process which stops cell growth when cells come into contact with each other or the extracellular matrix. In terms of biological role, catalyzes the addition of GlcNAc or GlcUA monosaccharides to the nascent hyaluronan polymer. Therefore, it is essential to hyaluronan synthesis a major component of most extracellular matrices that has a structural role in tissues architectures and regulates cell adhesion, migration and differentiation. This is one of three isoenzymes responsible for cellular hyaluronan synthesis and it is particularly responsible for the synthesis of high molecular mass hyaluronan. In Mus musculus (Mouse), this protein is Hyaluronan synthase 2.